Reading from the N-terminus, the 253-residue chain is Imidazole glycerol phosphate synthase subunit HisF (253 aa).

Residues Asp-11 and Asp-130 contribute to the active site.

It belongs to the HisA/HisF family. Heterodimer of HisH and HisF.

Its subcellular location is the cytoplasm. It carries out the reaction 5-[(5-phospho-1-deoxy-D-ribulos-1-ylimino)methylamino]-1-(5-phospho-beta-D-ribosyl)imidazole-4-carboxamide + L-glutamine = D-erythro-1-(imidazol-4-yl)glycerol 3-phosphate + 5-amino-1-(5-phospho-beta-D-ribosyl)imidazole-4-carboxamide + L-glutamate + H(+). Its pathway is amino-acid biosynthesis; L-histidine biosynthesis; L-histidine from 5-phospho-alpha-D-ribose 1-diphosphate: step 5/9. Its function is as follows. IGPS catalyzes the conversion of PRFAR and glutamine to IGP, AICAR and glutamate. The HisF subunit catalyzes the cyclization activity that produces IGP and AICAR from PRFAR using the ammonia provided by the HisH subunit. The sequence is that of Imidazole glycerol phosphate synthase subunit HisF from Clostridium botulinum (strain 657 / Type Ba4).